The following is a 341-amino-acid chain: MRVLGIETSCDETGVAIYDSEAGLLGHTLYSQVAVHAEYGGVVPELASRDHVRKLLPLVDGLLDNTDSRNKIDAIAYTSGPGLIGALLVGACFGRGLAMAWGCPAIGVHHMEGHLLAPMLEDAPPAFPFVALLVSGGHTQLVEVQGIGKYVLLGESLDDAAGEAFDKAAKMMDLDYPGGPNIAKLATKGDVSRFKFPRPMTDRPGLDFSFSGLKTFTLNTVAKYADETGLPDDQTCADIACAFQEAVVDTLVIKCRRALQQTKLNTLVIAGGVSANVRLRERLEAALAKINSQVYYARPEFCTDNGAMIAYAGCQRLLAGQVEPLAINVSPRWALDTLPAI.

Residues H110 and H114 each coordinate Fe cation. Residues L133–G137, D166, G179, and N276 each bind substrate. D304 contacts Fe cation.

It belongs to the KAE1 / TsaD family. The cofactor is Fe(2+).

The protein resides in the cytoplasm. It catalyses the reaction L-threonylcarbamoyladenylate + adenosine(37) in tRNA = N(6)-L-threonylcarbamoyladenosine(37) in tRNA + AMP + H(+). Functionally, required for the formation of a threonylcarbamoyl group on adenosine at position 37 (t(6)A37) in tRNAs that read codons beginning with adenine. Is involved in the transfer of the threonylcarbamoyl moiety of threonylcarbamoyl-AMP (TC-AMP) to the N6 group of A37, together with TsaE and TsaB. TsaD likely plays a direct catalytic role in this reaction. The polypeptide is tRNA N6-adenosine threonylcarbamoyltransferase (Saccharophagus degradans (strain 2-40 / ATCC 43961 / DSM 17024)).